We begin with the raw amino-acid sequence, 344 residues long: Heat-inducible transcription repressor HrcA (344 aa).

The protein belongs to the HrcA family.

In terms of biological role, negative regulator of class I heat shock genes (grpE-dnaK-dnaJ and groELS operons). Prevents heat-shock induction of these operons. This Streptococcus sanguinis (strain SK36) protein is Heat-inducible transcription repressor HrcA.